The primary structure comprises 216 residues: MAAEMRVTVSQLLKGIDRYNPENLKVLEHYVHLQVHENAYDLDANLAVLKLYQFNPAYSQTSVISQILLKALMNLPNADFIMCRCVIDDAIQQDLTIKKVILLAERLETCAFTSAWQFIKEEASLVDGVTGFHDAIRNYITYVIGVTYQTIEESLASELLGGLQGAQLQDWIKAKGWMSSDDGTIYVTNQEAHIKSKNIAEKIDFASVANIIAAAR.

The PCI domain maps to 40 to 202 (YDLDANLAVL…HIKSKNIAEK (163 aa)).

The protein belongs to the eIF-3 subunit K family. As to quaternary structure, component of the eukaryotic translation initiation factor 3 (eIF-3) complex.

It is found in the cytoplasm. In terms of biological role, component of the eukaryotic translation initiation factor 3 (eIF-3) complex, which is involved in protein synthesis of a specialized repertoire of mRNAs and, together with other initiation factors, stimulates binding of mRNA and methionyl-tRNAi to the 40S ribosome. The eIF-3 complex specifically targets and initiates translation of a subset of mRNAs involved in cell proliferation. This chain is Eukaryotic translation initiation factor 3 subunit K, found in Nematostella vectensis (Starlet sea anemone).